The following is a 743-amino-acid chain: Glycerol dehydrogenase large subunit (743 aa).

An N-terminal signal peptide occupies residues 1-24 (MRRSHLLATVACATLACAPLAANA). Residues 27 to 41 (APAGSGGSPTSSVPG) show a composition bias toward low complexity. 2 disordered regions span residues 27–115 (APAG…GHDD) and 445–474 (ILPV…STGM).

It belongs to the bacterial PQQ dehydrogenase family. Requires pyrroloquinoline quinone as cofactor.

It localises to the secreted. It carries out the reaction glycerol + A = dihydroxyacetone + AH2. In terms of biological role, catalyzes the oxidation of glycerol to glycerone. Also acts, more slowly, on a number of other polyols including D-sorbitol, D-arabinitol, D-mannitol, meso-erythritol, adonitol and propylene glycol. The protein is Glycerol dehydrogenase large subunit (sldA) of Gluconobacter oxydans (strain 621H) (Gluconobacter suboxydans).